We begin with the raw amino-acid sequence, 325 residues long: Glutarate 2-hydroxylase (325 aa).

The Fe cation site is built by His160, Asp162, and His292.

It belongs to the glutarate hydroxylase family. In terms of assembly, homotetramer. Fe(2+) serves as cofactor.

It catalyses the reaction glutarate + 2-oxoglutarate + O2 = (S)-2-hydroxyglutarate + succinate + CO2. Its pathway is amino-acid degradation. Its function is as follows. Acts as an alpha-ketoglutarate-dependent dioxygenase catalyzing hydroxylation of glutarate (GA) to L-2-hydroxyglutarate (L2HG). Functions in a L-lysine degradation pathway that proceeds via cadaverine, glutarate and L-2-hydroxyglutarate. This is Glutarate 2-hydroxylase from Salmonella typhimurium (strain SL1344).